We begin with the raw amino-acid sequence, 311 residues long: Haloalkane dehalogenase (311 aa).

One can recognise an AB hydrolase-1 domain in the interval 30–148 (AIVFQHGNPS…WDDFPDEVAQ (119 aa)). The active-site Nucleophile is Asp-107. Glu-131 functions as the Proton donor in the catalytic mechanism. Residue His-272 is the Proton acceptor of the active site.

Belongs to the haloalkane dehalogenase family. Type 2 subfamily. In terms of assembly, monomer.

The enzyme catalyses 1-haloalkane + H2O = a halide anion + a primary alcohol + H(+). Functionally, catalyzes hydrolytic cleavage of carbon-halogen bonds in halogenated aliphatic compounds, leading to the formation of the corresponding primary alcohols, halide ions and protons. In Mycolicibacterium smegmatis (strain ATCC 700084 / mc(2)155) (Mycobacterium smegmatis), this protein is Haloalkane dehalogenase.